The primary structure comprises 424 residues: L-glutamine:2-deoxy-scyllo-inosose aminotransferase (424 aa).

At Lys202 the chain carries N6-(pyridoxal phosphate)lysine.

The protein belongs to the DegT/DnrJ/EryC1 family. L-glutamine:2-deoxy-scyllo-inosose/scyllo-inosose aminotransferase subfamily. Pyridoxal 5'-phosphate serves as cofactor.

It carries out the reaction 2-deoxy-L-scyllo-inosose + L-glutamine = 2-deoxy-scyllo-inosamine + 2-oxoglutaramate. The enzyme catalyses 3-amino-2,3-dideoxy-scyllo-inosose + L-glutamine = 2-deoxystreptamine + 2-oxoglutaramate. The protein operates within metabolic intermediate biosynthesis; 2-deoxystreptamine biosynthesis; 2-deoxystreptamine from D-glucose 6-phosphate: step 2/4. It functions in the pathway metabolic intermediate biosynthesis; 2-deoxystreptamine biosynthesis; 2-deoxystreptamine from D-glucose 6-phosphate: step 4/4. It participates in antibiotic biosynthesis; paromomycin biosynthesis. Functionally, catalyzes the PLP-dependent transamination of 2-deoxy-scyllo-inosose (2-DOI) to form 2-deoxy-scyllo-inosamine (2-DOIA) using L-glutamine as the amino donor. Also catalyzes the transamination of 3-amino-2,3-dideoxy-scyllo-inosose (keto-2-DOIA) into 2-deoxystreptamine (2-DOS). The polypeptide is L-glutamine:2-deoxy-scyllo-inosose aminotransferase (parS) (Streptomyces paromomycinus (Streptomyces rimosus subsp. paromomycinus)).